Here is a 142-residue protein sequence, read N- to C-terminus: Large ribosomal subunit protein uL11 (142 aa).

It belongs to the universal ribosomal protein uL11 family. As to quaternary structure, part of the ribosomal stalk of the 50S ribosomal subunit. Interacts with L10 and the large rRNA to form the base of the stalk. L10 forms an elongated spine to which L12 dimers bind in a sequential fashion forming a multimeric L10(L12)X complex. One or more lysine residues are methylated.

Forms part of the ribosomal stalk which helps the ribosome interact with GTP-bound translation factors. This Serratia marcescens protein is Large ribosomal subunit protein uL11.